The following is a 509-amino-acid chain: Probable glycine dehydrogenase (decarboxylating) subunit 2 (509 aa).

An N6-(pyridoxal phosphate)lysine modification is found at lysine 278.

The protein belongs to the GcvP family. C-terminal subunit subfamily. As to quaternary structure, the glycine cleavage system is composed of four proteins: P, T, L and H. In this organism, the P 'protein' is a heterodimer of two subunits. Requires pyridoxal 5'-phosphate as cofactor.

It carries out the reaction N(6)-[(R)-lipoyl]-L-lysyl-[glycine-cleavage complex H protein] + glycine + H(+) = N(6)-[(R)-S(8)-aminomethyldihydrolipoyl]-L-lysyl-[glycine-cleavage complex H protein] + CO2. The glycine cleavage system catalyzes the degradation of glycine. The P protein binds the alpha-amino group of glycine through its pyridoxal phosphate cofactor; CO(2) is released and the remaining methylamine moiety is then transferred to the lipoamide cofactor of the H protein. This Saccharolobus islandicus (strain Y.N.15.51 / Yellowstone #2) (Sulfolobus islandicus) protein is Probable glycine dehydrogenase (decarboxylating) subunit 2.